The sequence spans 77 residues: MINMATITIDDDVYKELLKLKGRKSVSEFIKELLEERKRKNLDVFMIAFGSRSEEDVEKLKKELKEAEKWMQSLIQV.

This sequence belongs to the UPF0330 family.

In terms of biological role, possibly the antitoxin component of a type II toxin-antitoxin (TA) system. Its cognate toxin is VapC3 (Potential). This is Putative antitoxin VapB3 (vapB3) from Methanocaldococcus jannaschii (strain ATCC 43067 / DSM 2661 / JAL-1 / JCM 10045 / NBRC 100440) (Methanococcus jannaschii).